The sequence spans 61 residues: Small ribosomal subunit protein uS14 (61 aa).

Zn(2+) is bound by residues C24, C27, C40, and C43.

It belongs to the universal ribosomal protein uS14 family. Zinc-binding uS14 subfamily. As to quaternary structure, part of the 30S ribosomal subunit. Contacts proteins S3 and S10. It depends on Zn(2+) as a cofactor.

In terms of biological role, binds 16S rRNA, required for the assembly of 30S particles and may also be responsible for determining the conformation of the 16S rRNA at the A site. The chain is Small ribosomal subunit protein uS14 from Treponema denticola (strain ATCC 35405 / DSM 14222 / CIP 103919 / JCM 8153 / KCTC 15104).